A 231-amino-acid polypeptide reads, in one-letter code: TATA-box-binding protein (231 aa).

2 repeat units span residues 58–134 (LQNI…ARII) and 148–225 (IQNI…YPVL).

Belongs to the TBP family. As to quaternary structure, belongs to the TFIID complex together with the TBP-associated factors (TAFs). Binds DNA as monomer.

The protein resides in the nucleus. Its function is as follows. General transcription factor that functions at the core of the DNA-binding multiprotein factor TFIID. Binding of TFIID to the TATA box is the initial transcriptional step of the pre-initiation complex (PIC), playing a role in the activation of eukaryotic genes transcribed by RNA polymerase II. The sequence is that of TATA-box-binding protein (tbp1) from Schizosaccharomyces pombe (strain 972 / ATCC 24843) (Fission yeast).